Here is a 120-residue protein sequence, read N- to C-terminus: Protein crumbs homolog 3 (120 aa).

A signal peptide spans 1-26; sequence MANPGLGLLLALGLPFLLARWGRAWG. Residues 27–59 are Extracellular-facing; it reads QIQTTSANENSTVLPSSTSSSSDGNLRPEAITA. N-linked (GlcNAc...) asparagine glycosylation is present at asparagine 36. A helical membrane pass occupies residues 60 to 80; sequence IIVVFSLLAALLLAVGLALLV. Residues 81-120 are Cytoplasmic-facing; the sequence is RKLREKRQTEGTYRPSSEEQVGARVPPTPNLKLPPEERLI. The interval 84 to 120 is interaction with EPB41L5; sequence REKRQTEGTYRPSSEEQVGARVPPTPNLKLPPEERLI. The disordered stretch occupies residues 87–120; that stretch reads RQTEGTYRPSSEEQVGARVPPTPNLKLPPEERLI. Residues 90-99 show a composition bias toward polar residues; it reads EGTYRPSSEE. The PDZ-binding motif lies at 117 to 120; it reads ERLI.

In terms of assembly, component of a complex composed of CRB3, PALS1 and PATJ. Interacts (via C-terminus) with PALS1 (via PDZ domain). Interacts with PARD6A. Interacts (via intracellular domain) with EPB41L5. Interacts with WDR83. In terms of tissue distribution, preferentially expressed in epithelial tissues. Expressed at high levels in lung, kidney, and colon. Expressed at high levels in retina, colon and mammary glands. Moderately expressed in liver, spleen, pancreas and prostate. Moderately to weakly expressed in the placenta. Weakly expressed in skeletal muscle and small intestine.

Its subcellular location is the apical cell membrane. It localises to the cell junction. The protein localises to the tight junction. Involved in the establishment of cell polarity in mammalian epithelial cells. Regulates the morphogenesis of tight junctions. Involved in promoting phosphorylation and cytoplasmic retention of transcriptional coactivators YAP1 and WWTR1/TAZ which leads to suppression of TGFB1-dependent transcription of target genes such as CCN2/CTGF, SERPINE1/PAI1, SNAI1/SNAIL1 and SMAD7. This is Protein crumbs homolog 3 from Homo sapiens (Human).